Consider the following 394-residue polypeptide: Elongation factor Tu (394 aa).

A tr-type G domain is found at 10 to 204 (KPHVNVGTIG…ALDSYIPTPE (195 aa)). A G1 region spans residues 19–26 (GHVDHGKT). GTP is bound at residue 19-26 (GHVDHGKT). Threonine 26 is a Mg(2+) binding site. A G2 region spans residues 60–64 (GITIN). The interval 81–84 (DCPG) is G3. GTP is bound by residues 81 to 85 (DCPGH) and 136 to 139 (NKCD). A G4 region spans residues 136–139 (NKCD). The G5 stretch occupies residues 174–176 (SAL).

This sequence belongs to the TRAFAC class translation factor GTPase superfamily. Classic translation factor GTPase family. EF-Tu/EF-1A subfamily. As to quaternary structure, monomer.

It is found in the cytoplasm. It catalyses the reaction GTP + H2O = GDP + phosphate + H(+). Its function is as follows. GTP hydrolase that promotes the GTP-dependent binding of aminoacyl-tRNA to the A-site of ribosomes during protein biosynthesis. This chain is Elongation factor Tu, found in Neisseria meningitidis serogroup A / serotype 4A (strain DSM 15465 / Z2491).